Reading from the N-terminus, the 217-residue chain is Small ribosomal subunit protein uS3c (217 aa).

Residues 43-117 enclose the KH type-2 domain; it reads IKNYVQKNRK…KLNIAITRIA (75 aa).

This sequence belongs to the universal ribosomal protein uS3 family. In terms of assembly, part of the 30S ribosomal subunit.

The protein localises to the plastid. It is found in the chloroplast. The protein is Small ribosomal subunit protein uS3c (rps3) of Ranunculus macranthus (Large buttercup).